Reading from the N-terminus, the 163-residue chain is uncharacterized protein (163 aa).

Residues 1–54 are disordered; sequence MGKSARLRRSQTSSPENVLLGKDSSDDPYRSDSETESNSSSGTESNMSSDSTTS. Basic and acidic residues predominate over residues 23-33; it reads DSSDDPYRSDS. Positions 36–52 are enriched in low complexity; that stretch reads ESNSSSGTESNMSSDST. The stretch at 69-143 forms a coiled coil; it reads LRTELAEMEM…VEELESSTRE (75 aa).

This is an uncharacterized protein from Arabidopsis thaliana (Mouse-ear cress).